A 93-amino-acid chain; its full sequence is Acylphosphatase (93 aa).

The 88-residue stretch at 6–93 (RAIVTVKGLV…GEFDTFDVRY (88 aa)) folds into the Acylphosphatase-like domain. Active-site residues include arginine 21 and asparagine 39.

This sequence belongs to the acylphosphatase family.

It carries out the reaction an acyl phosphate + H2O = a carboxylate + phosphate + H(+). This is Acylphosphatase (acyP) from Geobacter metallireducens (strain ATCC 53774 / DSM 7210 / GS-15).